A 200-amino-acid polypeptide reads, in one-letter code: Riboflavin synthase (200 aa).

Lumazine-binding repeat units lie at residues 1–97 and 98–190; these read MFSG…IGGH and LLSG…VDTV. Residues 4 to 6, 48 to 50, 62 to 67, 101 to 103, Lys-132, 141 to 143, and 155 to 160 contribute to the 2,4-dihydroxypteridine site; these read GII, CLT, DVIPET, GHV, SLT, and GLIPET.

In terms of assembly, homotrimer.

The catalysed reaction is 2 6,7-dimethyl-8-(1-D-ribityl)lumazine + H(+) = 5-amino-6-(D-ribitylamino)uracil + riboflavin. Its pathway is cofactor biosynthesis; riboflavin biosynthesis; riboflavin from 2-hydroxy-3-oxobutyl phosphate and 5-amino-6-(D-ribitylamino)uracil: step 2/2. In terms of biological role, catalyzes the dismutation of two molecules of 6,7-dimethyl-8-ribityllumazine, resulting in the formation of riboflavin and 5-amino-6-(D-ribitylamino)uracil. The protein is Riboflavin synthase (ribE) of Chlamydia pneumoniae (Chlamydophila pneumoniae).